Here is a 73-residue protein sequence, read N- to C-terminus: Protein WFDC10B (73 aa).

The first 21 residues, methionine 1–glycine 21, serve as a signal peptide directing secretion. The WAP domain maps to arginine 28–leucine 73.

Ubiquitously expressed.

The protein localises to the secreted. This is Protein WFDC10B (WFDC10B) from Homo sapiens (Human).